Consider the following 211-residue polypeptide: tRNA (guanine-N(7)-)-methyltransferase (211 aa).

Glu43, Asp68, and Asn117 together coordinate S-adenosyl-L-methionine. Substrate is bound by residues Lys121, Asp153, and 190-193 (TEYE).

The protein belongs to the class I-like SAM-binding methyltransferase superfamily. TrmB family.

The enzyme catalyses guanosine(46) in tRNA + S-adenosyl-L-methionine = N(7)-methylguanosine(46) in tRNA + S-adenosyl-L-homocysteine. Its pathway is tRNA modification; N(7)-methylguanine-tRNA biosynthesis. Functionally, catalyzes the formation of N(7)-methylguanine at position 46 (m7G46) in tRNA. The chain is tRNA (guanine-N(7)-)-methyltransferase from Clostridium acetobutylicum (strain ATCC 824 / DSM 792 / JCM 1419 / IAM 19013 / LMG 5710 / NBRC 13948 / NRRL B-527 / VKM B-1787 / 2291 / W).